The sequence spans 368 residues: GLABROUS1 enhancer-binding protein-like (368 aa).

Positions 1-123 (MAPKKAEEVV…TSDTEHVKKP (123 aa)) are disordered. Acidic residues predominate over residues 17–31 (SEEEESGSSGEESES). The span at 35 to 47 (VPKKVESSQKPES) shows a compositional bias: basic and acidic residues. Positions 84–97 (TSGSAATVPESSTA) are enriched in polar residues. The segment covering 100-123 (PLKEAAPEAIKKQKTSDTEHVKKP) has biased composition (basic and acidic residues).

Belongs to the GeBP family. In terms of assembly, mono-, di- and oligomers. Associated with the Mediator complex. Interacts with MED6. Interacts with MED10A, MED28 and MED32. Interacts with DEK3.

It localises to the nucleus. Its function is as follows. Transcription factor that binds promoters containing the CryR2 element, 5'-ACATAWCT-3'. The DNA-binding activity is decreased upon direct physical interaction with the mediator subunits and is modulated by redox conditions. The oxidized protein is the preferential binding form. The sequence is that of GLABROUS1 enhancer-binding protein-like from Arabidopsis thaliana (Mouse-ear cress).